Here is an 808-residue protein sequence, read N- to C-terminus: MNIDDKLEGMLLKYSPVGLQHPSRGLGPSRVDGRGRRGSLDMTLGERSLANHPLLAEDDDDEDEEEDDDDDLAGEGLTSHDLISQDDLMVHEETVKNDGQDEAAFSHRISNKLHYTLSMPVNIKQEMKVPDSLILNKKEKKPGRDPSDCHKKKKRKQRSPAKILTINEDGSLGHQNPKSHICEHCNAAFRTNYHLQRHVFIHTGEKPFQCNQCDMRFIQKYLLQRHEKIHTGEKPFRCDECGMKFIQKYHMERHKRTHSGEKPYQCDYCHQFFSRTDRVLKHRRMCHENKDRKVQKTAVKDSPLRTPENLGFSFPAKDCTLPKKKRQKTSDKSRASITNPAVDKVVEADMDEKTEDRLAKSECLPLYAVATKVKDEYVVTDYSVELPDSPPGSRHLAGEESNDEIISPPKLVLKKIASRRGFKQQALEQSQSLSPLSSFEESKVTRYTFEIVDNKGLLDVETNPDMESVEALQVGQAKPTGSSTNYDDAMQFVKKRRYLQAATANTSRDYALNVSSIVSQSSVTQASVATVIDETVPATILSETQTLNVEIKSSNEKNVLPDEVLQTLLDHYSNKANGQAEISFSVADTEVTSSISINSSDESSPAEALVTSSQAPPTEKASLLQEYSKFLQQALERTSQNDTYLNNQSLTFVNDSASLAGQPLFSTEKQFTSPPRFRPTMNSPLRSTLEKPNFNLLVDTQHSFSFSGDETNPSSVSPTEDFLDQVTSPKKTDPQSISQTFQITTFDQNFRSQFPSSRSGISPQFSIASGQVTLRGHGGADFPEFSLVNETRTQLTSSPDATSSQTFG.

2 disordered regions span residues 15–86 (SPVG…ISQD) and 131–162 (DSLILNKKEKKPGRDPSDCHKKKKRKQRSPAK). Residues 56–73 (AEDDDDEDEEEDDDDDLA) are compositionally biased toward acidic residues. The segment covering 150–159 (HKKKKRKQRS) has biased composition (basic residues). 4 C2H2-type zinc fingers span residues 180 to 202 (HICEHCNAAFRTNYHLQRHVFIH), 208 to 230 (FQCNQCDMRFIQKYLLQRHEKIH), 236 to 258 (FRCDECGMKFIQKYHMERHKRTH), and 264 to 287 (YQCDYCHQFFSRTDRVLKHRRMCH). Disordered regions lie at residues 305–338 (RTPENLGFSFPAKDCTLPKKKRQKTSDKSRASIT), 596–617 (SINSSDESSPAEALVTSSQAPP), and 705–736 (SFSGDETNPSSVSPTEDFLDQVTSPKKTDPQS). Composition is skewed to polar residues over residues 705-718 (SFSGDETNPSSVSP) and 725-736 (QVTSPKKTDPQS).

This sequence belongs to the krueppel C2H2-type zinc-finger protein family.

The protein localises to the nucleus. In terms of biological role, involved in transcriptional regulation. Represses the transcription of a number of genes. Required for primitive and definitive hematopoiesis during embryonic development. In Danio rerio (Zebrafish), this protein is Zinc finger protein 148 (znf148).